The sequence spans 260 residues: Cytochrome c oxidase subunit 3 (260 aa).

6 consecutive transmembrane segments (helical) span residues 30–50 (LILWFHINSTILFILGTVLLV), 81–101 (GMILFITSEVCLFFAFFWAFF), 126–146 (FLVPLLNTAVLLSSGVTVTWA), 158–178 (AIQSLTLTVFLGVYFTILQAW), 196–216 (FFVATGFHGLHVLIGTAFLAV), and 239–259 (WYWHFVDVVWLFLYICIYWWG).

This sequence belongs to the cytochrome c oxidase subunit 3 family. In terms of assembly, component of the cytochrome c oxidase (complex IV, CIV), a multisubunit enzyme composed of a catalytic core of 3 subunits and several supernumerary subunits. The complex exists as a monomer or a dimer and forms supercomplexes (SCs) in the inner mitochondrial membrane with ubiquinol-cytochrome c oxidoreductase (cytochrome b-c1 complex, complex III, CIII).

It is found in the mitochondrion inner membrane. It catalyses the reaction 4 Fe(II)-[cytochrome c] + O2 + 8 H(+)(in) = 4 Fe(III)-[cytochrome c] + 2 H2O + 4 H(+)(out). Functionally, component of the cytochrome c oxidase, the last enzyme in the mitochondrial electron transport chain which drives oxidative phosphorylation. The respiratory chain contains 3 multisubunit complexes succinate dehydrogenase (complex II, CII), ubiquinol-cytochrome c oxidoreductase (cytochrome b-c1 complex, complex III, CIII) and cytochrome c oxidase (complex IV, CIV), that cooperate to transfer electrons derived from NADH and succinate to molecular oxygen, creating an electrochemical gradient over the inner membrane that drives transmembrane transport and the ATP synthase. Cytochrome c oxidase is the component of the respiratory chain that catalyzes the reduction of oxygen to water. Electrons originating from reduced cytochrome c in the intermembrane space (IMS) are transferred via the dinuclear copper A center (CU(A)) of subunit 2 and heme A of subunit 1 to the active site in subunit 1, a binuclear center (BNC) formed by heme A3 and copper B (CU(B)). The BNC reduces molecular oxygen to 2 water molecules using 4 electrons from cytochrome c in the IMS and 4 protons from the mitochondrial matrix. This chain is Cytochrome c oxidase subunit 3 (COIII), found in Pisaster ochraceus (Ochre sea star).